The following is a 314-amino-acid chain: GTPase Era (314 aa).

One can recognise an Era-type G domain in the interval 21–189 (KSGFVGIIGR…QNTLIEQLEP (169 aa)). Residues 29-36 (GRPNVGKS) are G1. 29–36 (GRPNVGKS) contacts GTP. Residues 55–59 (QTTRN) form a G2 region. The interval 76-79 (DTPG) is G3. GTP is bound by residues 76–80 (DTPGI) and 138–141 (NKSD). The G4 stretch occupies residues 138–141 (NKSD). The tract at residues 168–170 (FSA) is G5. The KH type-2 domain maps to 212–296 (IREQILQLTR…FLKLFVKVEP (85 aa)).

It belongs to the TRAFAC class TrmE-Era-EngA-EngB-Septin-like GTPase superfamily. Era GTPase family. Monomer.

It localises to the cytoplasm. The protein resides in the cell inner membrane. Its function is as follows. An essential GTPase that binds both GDP and GTP, with rapid nucleotide exchange. Plays a role in 16S rRNA processing and 30S ribosomal subunit biogenesis and possibly also in cell cycle regulation and energy metabolism. The polypeptide is GTPase Era (Crocosphaera subtropica (strain ATCC 51142 / BH68) (Cyanothece sp. (strain ATCC 51142))).